A 189-amino-acid chain; its full sequence is Cancer/testis antigen family 45 member A5 (189 aa).

Residues 1 to 23 (MTDKTEKVAVDPETVFKRPRECD) show a composition bias toward basic and acidic residues. Disordered regions lie at residues 1-27 (MTDK…SPSY) and 82-118 (DGMM…SPKS).

Belongs to the CT45 family. Testis specific. Expressed in cancer cell lines.

The protein localises to the nucleus. This chain is Cancer/testis antigen family 45 member A5, found in Homo sapiens (Human).